Here is a 222-residue protein sequence, read N- to C-terminus: Ribulose-phosphate 3-epimerase (222 aa).

Residue Ser7 coordinates substrate. A divalent metal cation-binding residues include His32, Asp34, and His65. Residue Asp34 is the Proton acceptor of the active site. Residues His65, 141–144 (GFSG), 174–176 (DGG), and 196–197 (GS) contribute to the substrate site. Asp174 is a binding site for a divalent metal cation. The active-site Proton donor is Asp174.

It belongs to the ribulose-phosphate 3-epimerase family. A divalent metal cation serves as cofactor.

The catalysed reaction is D-ribulose 5-phosphate = D-xylulose 5-phosphate. It participates in carbohydrate degradation. Functionally, catalyzes the reversible epimerization of D-ribulose 5-phosphate to D-xylulose 5-phosphate. This Aquifex aeolicus (strain VF5) protein is Ribulose-phosphate 3-epimerase.